The primary structure comprises 181 residues: Ribonuclease HII (181 aa).

An RNase H type-2 domain is found at 1-181; it reads MICGIDEVGR…SLHRKNFKLI (181 aa). The a divalent metal cation site is built by aspartate 6, glutamate 7, and aspartate 98.

Belongs to the RNase HII family. Requires Mn(2+) as cofactor. Mg(2+) serves as cofactor.

It is found in the cytoplasm. It carries out the reaction Endonucleolytic cleavage to 5'-phosphomonoester.. In terms of biological role, endonuclease that specifically degrades the RNA of RNA-DNA hybrids. This is Ribonuclease HII (rnhB) from Borreliella burgdorferi (strain ATCC 35210 / DSM 4680 / CIP 102532 / B31) (Borrelia burgdorferi).